The primary structure comprises 86 residues: MKPDIHPVYRTVVFHDTSANEYVKVGSTIKTEREIELDGVTYPYVTIDVSSKSHPFYTGRQKTFDSESSAARFQKRFGHFIGAKRG.

Belongs to the bacterial ribosomal protein bL31 family. Type B subfamily. As to quaternary structure, part of the 50S ribosomal subunit.

This Salmonella agona (strain SL483) protein is Large ribosomal subunit protein bL31B.